The following is a 179-amino-acid chain: Large ribosomal subunit protein uL5 (179 aa).

The protein belongs to the universal ribosomal protein uL5 family. As to quaternary structure, part of the 50S ribosomal subunit; part of the 5S rRNA/L5/L18/L25 subcomplex. Contacts the 5S rRNA and the P site tRNA. Forms a bridge to the 30S subunit in the 70S ribosome.

In terms of biological role, this is one of the proteins that bind and probably mediate the attachment of the 5S RNA into the large ribosomal subunit, where it forms part of the central protuberance. In the 70S ribosome it contacts protein S13 of the 30S subunit (bridge B1b), connecting the 2 subunits; this bridge is implicated in subunit movement. Contacts the P site tRNA; the 5S rRNA and some of its associated proteins might help stabilize positioning of ribosome-bound tRNAs. The chain is Large ribosomal subunit protein uL5 from Pectobacterium atrosepticum (strain SCRI 1043 / ATCC BAA-672) (Erwinia carotovora subsp. atroseptica).